The chain runs to 469 residues: Glutamine synthetase (469 aa).

Positions 13-97 (HEVKFVDLRF…IRCDILEPGT (85 aa)) constitute a GS beta-grasp domain. A GS catalytic domain is found at 105–469 (PRSIAKRAED…PVEFELYYSV (365 aa)). Positions 130 and 132 each coordinate Mg(2+). An ATP-binding site is contributed by Glu-208. The Mg(2+) site is built by Glu-213 and Glu-221. Residues 265–266 (NG) and Gly-266 contribute to the L-glutamate site. Residue His-270 coordinates Mg(2+). ATP is bound by residues 272–274 (HMS) and Ser-274. L-glutamate contacts are provided by Arg-322, Glu-328, and Arg-340. Residues Arg-340, Arg-345, and Lys-353 each contribute to the ATP site. A Mg(2+)-binding site is contributed by Glu-358. Arg-360 contributes to the L-glutamate binding site. Tyr-398 carries the O-AMP-tyrosine modification.

It belongs to the glutamine synthetase family. As to quaternary structure, oligomer of 12 subunits arranged in the form of two hexagons. Mn(2+) serves as cofactor.

Its subcellular location is the cytoplasm. It catalyses the reaction L-glutamate + NH4(+) + ATP = L-glutamine + ADP + phosphate + H(+). When cellular nitrogen levels are high, the C-terminal adenylyl transferase (AT) of GlnE inhibits GlnA by covalent transfer of an adenylyl group from ATP to Tyr-398. Conversely, when nitrogen levels are low, the N-terminal adenylyl removase (AR) of GlnE activates GlnA by removing the adenylyl group by phosphorolysis. The fully adenylated enzyme complex is inactive. In terms of biological role, catalyzes the ATP-dependent biosynthesis of glutamine from glutamate and ammonia. This Salmonella typhi protein is Glutamine synthetase.